Reading from the N-terminus, the 91-residue chain is Non-specific lipid-transfer protein 1 (91 aa).

Intrachain disulfides connect Cys-4/Cys-51, Cys-14/Cys-28, Cys-29/Cys-74, and Cys-49/Cys-88.

As to expression, expressed in seeds (at protein level).

Functionally, plant non-specific lipid-transfer proteins transfer phospholipids as well as galactolipids across membranes. May play a role in wax or cutin deposition in the cell walls of expanding epidermal cells and certain secretory tissues. Binds to both saturated and unsaturated lipids, with the highest binding efficiency for linoleic acid, followed by linolenic acid. The chain is Non-specific lipid-transfer protein 1 from Foeniculum vulgare (Fennel).